The primary structure comprises 313 residues: MVAYLEFEKPIAELQARIAELRSTADAGSLDLESEASKLEAKSDKLLRDTYAKLTPWQKTQVARHPERPHFKDYVAGFITDFMPLAGDRAFADDQAIIGGLGRLGDRKVMVIGHEKGDDTASRIRHNFGMAKPEGYRKAIRLMELADRFGLPVVSLVDTSGAFPGIQAEERGQAEAIARSTEACLALGVPMVAAVVGEGGSGGAIAVAAANSVLMFEHAVYSVISPEGCASILWRTGDKAAEAAEAMKVTAADLQKLGVVDRVVAEPVGGAHRDPAAAIAALGAAIGEELDKLAGKKPTALRAARRDKFLAIG.

Residues 42–292 enclose the CoA carboxyltransferase C-terminal domain; that stretch reads KSDKLLRDTY…GAAIGEELDK (251 aa).

This sequence belongs to the AccA family. In terms of assembly, acetyl-CoA carboxylase is a heterohexamer composed of biotin carboxyl carrier protein (AccB), biotin carboxylase (AccC) and two subunits each of ACCase subunit alpha (AccA) and ACCase subunit beta (AccD).

It localises to the cytoplasm. The enzyme catalyses N(6)-carboxybiotinyl-L-lysyl-[protein] + acetyl-CoA = N(6)-biotinyl-L-lysyl-[protein] + malonyl-CoA. The protein operates within lipid metabolism; malonyl-CoA biosynthesis; malonyl-CoA from acetyl-CoA: step 1/1. In terms of biological role, component of the acetyl coenzyme A carboxylase (ACC) complex. First, biotin carboxylase catalyzes the carboxylation of biotin on its carrier protein (BCCP) and then the CO(2) group is transferred by the carboxyltransferase to acetyl-CoA to form malonyl-CoA. The chain is Acetyl-coenzyme A carboxylase carboxyl transferase subunit alpha from Rhizorhabdus wittichii (strain DSM 6014 / CCUG 31198 / JCM 15750 / NBRC 105917 / EY 4224 / RW1) (Sphingomonas wittichii).